The following is a 376-amino-acid chain: Aspartate-semialdehyde dehydrogenase (376 aa).

Residues 11–14 (RGMV), 38–39 (TS), and Q74 each bind NADP(+). R103 contributes to the phosphate binding site. C136 serves as the catalytic Acyl-thioester intermediate. Q163 contributes to the substrate binding site. NADP(+) contacts are provided by residues 166 to 167 (SG) and P194. E242 provides a ligand contact to substrate. Position 245 (K245) interacts with phosphate. Position 273 (R273) interacts with substrate. The active-site Proton acceptor is H280. An NADP(+)-binding site is contributed by Q356.

The protein belongs to the aspartate-semialdehyde dehydrogenase family. In terms of assembly, homodimer.

The catalysed reaction is L-aspartate 4-semialdehyde + phosphate + NADP(+) = 4-phospho-L-aspartate + NADPH + H(+). The protein operates within amino-acid biosynthesis; L-lysine biosynthesis via DAP pathway; (S)-tetrahydrodipicolinate from L-aspartate: step 2/4. It participates in amino-acid biosynthesis; L-methionine biosynthesis via de novo pathway; L-homoserine from L-aspartate: step 2/3. It functions in the pathway amino-acid biosynthesis; L-threonine biosynthesis; L-threonine from L-aspartate: step 2/5. Functionally, catalyzes the NADPH-dependent formation of L-aspartate-semialdehyde (L-ASA) by the reductive dephosphorylation of L-aspartyl-4-phosphate. The protein is Aspartate-semialdehyde dehydrogenase of Bordetella pertussis (strain Tohama I / ATCC BAA-589 / NCTC 13251).